The sequence spans 535 residues: RNA-splicing ligase RtcB homolog 1 (535 aa).

Positions 1-16 are enriched in basic residues; that stretch reads MAKSRYSRKNKGKKLQ. The disordered stretch occupies residues 1 to 29; it reads MAKSRYSRKNKGKKLQRVQENTVSTEEKS. Mn(2+) contacts are provided by Asp152, Cys155, His260, His292, and His383. GMP is bound at residue 259 to 263; it reads NHYLE. Residues 383–384, 432–435, Ser439, 458–461, and Lys534 each bind GMP; these read HN, GGSM, and HGAG. His458 acts as the GMP-histidine intermediate in catalysis.

Belongs to the RtcB family. In terms of assembly, catalytic component of the tRNA-splicing ligase complex. Requires Mn(2+) as cofactor.

It catalyses the reaction a 3'-end 3'-phospho-ribonucleotide-RNA + a 5'-end dephospho-ribonucleoside-RNA + GTP = a ribonucleotidyl-ribonucleotide-RNA + GMP + diphosphate. The catalysed reaction is a 3'-end 2',3'-cyclophospho-ribonucleotide-RNA + a 5'-end dephospho-ribonucleoside-RNA + GTP + H2O = a ribonucleotidyl-ribonucleotide-RNA + GMP + diphosphate + H(+). Catalytic subunit of the tRNA-splicing ligase complex that acts by directly joining spliced tRNA halves to mature-sized tRNAs by incorporating the precursor-derived splice junction phosphate into the mature tRNA as a canonical 3',5'-phosphodiester. May act as an RNA ligase with broad substrate specificity, and may function toward other RNAs. The protein is RNA-splicing ligase RtcB homolog 1 of Entamoeba dispar (strain ATCC PRA-260 / SAW760).